Here is a 160-residue protein sequence, read N- to C-terminus: Mediator of RNA polymerase II transcription subunit 31 (160 aa).

Positions G124–T160 are disordered. Residues T147 to T160 are compositionally biased toward polar residues.

Belongs to the Mediator complex subunit 31 family. Component of the Mediator complex.

It is found in the nucleus. Component of the Mediator complex, a coactivator involved in the regulated transcription of nearly all RNA polymerase II-dependent genes. Mediator functions as a bridge to convey information from gene-specific regulatory proteins to the basal RNA polymerase II transcription machinery. Mediator is recruited to promoters by direct interactions with regulatory proteins and serves as a scaffold for the assembly of a functional preinitiation complex with RNA polymerase II and the general transcription factors. The polypeptide is Mediator of RNA polymerase II transcription subunit 31 (soh1) (Aspergillus terreus (strain NIH 2624 / FGSC A1156)).